The sequence spans 156 residues: Transcriptional repressor NrdR (156 aa).

The segment at 3–34 is a zinc-finger region; that stretch reads CPFCGSMDTRVLDSRPTLDGTAIRRRRECSSC. Residues 49–139 form the ATP-cone domain; it reads VLVVKKDGRR…VYRDFREVDQ (91 aa).

It belongs to the NrdR family. The cofactor is Zn(2+).

In terms of biological role, negatively regulates transcription of bacterial ribonucleotide reductase nrd genes and operons by binding to NrdR-boxes. The polypeptide is Transcriptional repressor NrdR (Thermotoga maritima (strain ATCC 43589 / DSM 3109 / JCM 10099 / NBRC 100826 / MSB8)).